Reading from the N-terminus, the 117-residue chain is Cuticle protein CP1243 (117 aa).

Repeat copies occupy residues 1 to 17 (NYGE…LVQF), 26 to 43 (AEIG…HVQF), 67 to 84 (QPYG…NRQF), and 93 to 110 (VLVG…NVQF).

In terms of tissue distribution, calcified shell.

The chain is Cuticle protein CP1243 from Cancer pagurus (Rock crab).